Consider the following 316-residue polypeptide: Acetyl-coenzyme A carboxylase carboxyl transferase subunit beta (316 aa).

One can recognise a CoA carboxyltransferase N-terminal domain in the interval 39 to 308; that stretch reads LWHKCSKCGV…PPHMVLWETM (270 aa). Cys43, Cys46, Cys62, and Cys65 together coordinate Zn(2+). The C4-type zinc-finger motif lies at 43–65; sequence CSKCGVLAYTKDLKANQMVCIEC.

Belongs to the AccD/PCCB family. In terms of assembly, acetyl-CoA carboxylase is a heterohexamer composed of biotin carboxyl carrier protein (AccB), biotin carboxylase (AccC) and two subunits each of ACCase subunit alpha (AccA) and ACCase subunit beta (AccD). The cofactor is Zn(2+).

The protein localises to the cytoplasm. It carries out the reaction N(6)-carboxybiotinyl-L-lysyl-[protein] + acetyl-CoA = N(6)-biotinyl-L-lysyl-[protein] + malonyl-CoA. It participates in lipid metabolism; malonyl-CoA biosynthesis; malonyl-CoA from acetyl-CoA: step 1/1. Its function is as follows. Component of the acetyl coenzyme A carboxylase (ACC) complex. Biotin carboxylase (BC) catalyzes the carboxylation of biotin on its carrier protein (BCCP) and then the CO(2) group is transferred by the transcarboxylase to acetyl-CoA to form malonyl-CoA. In Nostoc punctiforme (strain ATCC 29133 / PCC 73102), this protein is Acetyl-coenzyme A carboxylase carboxyl transferase subunit beta.